We begin with the raw amino-acid sequence, 288 residues long: Rhythmically expressed gene 5 protein (288 aa).

In terms of tissue distribution, expressed in head, but not in the body. Expression levels oscillate with the circadian rhythm.

In terms of biological role, involved in the generation of biological rhythms (Potential). In the head, oscillates in abundance with a daily peak during early night, even under constant darkness. Oscillation is dependent on period (per) function. The polypeptide is Rhythmically expressed gene 5 protein (Reg-5) (Drosophila melanogaster (Fruit fly)).